The sequence spans 157 residues: Protein NrdI (157 aa).

Belongs to the NrdI family.

Probably involved in ribonucleotide reductase function. This chain is Protein NrdI, found in Mycoplasma capricolum subsp. capricolum (strain California kid / ATCC 27343 / NCTC 10154).